Consider the following 880-residue polypeptide: Valine--tRNA ligase (880 aa).

The 'HIGH' region signature appears at 49–59 (PNVTGKLHLGH). Positions 525 to 529 (KMSKS) match the 'KMSKS' region motif. An ATP-binding site is contributed by K528. Residues 809–879 (LAGLLDLEEE…AVRARIKELK (71 aa)) are a coiled coil.

This sequence belongs to the class-I aminoacyl-tRNA synthetase family. ValS type 1 subfamily. In terms of assembly, monomer.

It localises to the cytoplasm. The enzyme catalyses tRNA(Val) + L-valine + ATP = L-valyl-tRNA(Val) + AMP + diphosphate. Functionally, catalyzes the attachment of valine to tRNA(Val). As ValRS can inadvertently accommodate and process structurally similar amino acids such as threonine, to avoid such errors, it has a 'posttransfer' editing activity that hydrolyzes mischarged Thr-tRNA(Val) in a tRNA-dependent manner. The protein is Valine--tRNA ligase of Halalkalibacterium halodurans (strain ATCC BAA-125 / DSM 18197 / FERM 7344 / JCM 9153 / C-125) (Bacillus halodurans).